The following is a 393-amino-acid chain: S-adenosylmethionine synthase 2 (393 aa).

Glutamate 9 provides a ligand contact to Mg(2+). Histidine 15 serves as a coordination point for ATP. Glutamate 43 contributes to the K(+) binding site. Glutamate 56 and glutamine 99 together coordinate L-methionine. Residues 167-169 (DGK), 235-238 (SGRF), aspartate 246, 252-253 (RK), alanine 269, lysine 273, and lysine 277 each bind ATP. Aspartate 246 serves as a coordination point for L-methionine. Lysine 277 is an L-methionine binding site.

Belongs to the AdoMet synthase family. In terms of assembly, homotetramer. The cofactor is Mn(2+). Requires Mg(2+) as cofactor. Co(2+) is required as a cofactor. It depends on K(+) as a cofactor.

It localises to the cytoplasm. The enzyme catalyses L-methionine + ATP + H2O = S-adenosyl-L-methionine + phosphate + diphosphate. It participates in amino-acid biosynthesis; S-adenosyl-L-methionine biosynthesis; S-adenosyl-L-methionine from L-methionine: step 1/1. Functionally, catalyzes the formation of S-adenosylmethionine from methionine and ATP. The reaction comprises two steps that are both catalyzed by the same enzyme: formation of S-adenosylmethionine (AdoMet) and triphosphate, and subsequent hydrolysis of the triphosphate. This Vitis vinifera (Grape) protein is S-adenosylmethionine synthase 2 (METK2).